Consider the following 148-residue polypeptide: UPF0178 protein lpp0103 (148 aa).

Belongs to the UPF0178 family.

This is UPF0178 protein lpp0103 from Legionella pneumophila (strain Paris).